Reading from the N-terminus, the 198-residue chain is Probable chorismate pyruvate-lyase (198 aa).

Arg-76, Leu-114, and Glu-172 together coordinate substrate.

It belongs to the UbiC family.

The protein localises to the cytoplasm. It carries out the reaction chorismate = 4-hydroxybenzoate + pyruvate. The protein operates within cofactor biosynthesis; ubiquinone biosynthesis. Functionally, removes the pyruvyl group from chorismate, with concomitant aromatization of the ring, to provide 4-hydroxybenzoate (4HB) for the ubiquinone pathway. The chain is Probable chorismate pyruvate-lyase from Bordetella avium (strain 197N).